The primary structure comprises 124 residues: Membrane-anchored ubiquitin-fold protein 2 (124 aa).

The 67-residue stretch at 8–74 folds into the Ubiquitin-like domain; it reads LEIKFRLNDG…LENNKTVGDC (67 aa). S-palmitoyl cysteine attachment occurs at residues C115, C117, C119, and C124.

In terms of processing, acylated protein. Probably modified with palmitate. Ubiquitous, but three fold higher expression in stamens.

The protein localises to the cell membrane. May serve as docking site to facilitate the association of other proteins to the plasma membrane. This Arabidopsis thaliana (Mouse-ear cress) protein is Membrane-anchored ubiquitin-fold protein 2 (MUB2).